Consider the following 128-residue polypeptide: MPKSVIIPAGSSAPLAPFVPGTLADGVVYVSGTLAFDQHNNVLFADDPKAQTRHVLATIRKVIETAGGTMADVTFNSIFITDWKNYAAINEIYAEFFPGDKPARFCIQCGLVKPDALVEIATIAHIAK.

This sequence belongs to the RutC family. Homotrimer.

It carries out the reaction (Z)-3-aminoacrylate + H2O + H(+) = 3-oxopropanoate + NH4(+). Its function is as follows. Involved in pyrimidine catabolism. Catalyzes the deamination of 3-aminoacrylate to malonic semialdehyde, a reaction that can also occur spontaneously. RutC may facilitate the reaction and modulate the metabolic fitness, rather than catalyzing essential functions. In Escherichia coli (strain SE11), this protein is 3-aminoacrylate deaminase RutC.